Here is a 436-residue protein sequence, read N- to C-terminus: UDP-N-acetylmuramate--L-alanine ligase (436 aa).

Position 108–114 (108–114 (GAHGKTS)) interacts with ATP.

The protein belongs to the MurCDEF family.

The protein localises to the cytoplasm. The enzyme catalyses UDP-N-acetyl-alpha-D-muramate + L-alanine + ATP = UDP-N-acetyl-alpha-D-muramoyl-L-alanine + ADP + phosphate + H(+). It functions in the pathway cell wall biogenesis; peptidoglycan biosynthesis. Cell wall formation. The polypeptide is UDP-N-acetylmuramate--L-alanine ligase (Bacillus cereus (strain Q1)).